Reading from the N-terminus, the 227-residue chain is Small ribosomal subunit protein uS3 (227 aa).

The region spanning 39–109 (IHRFFEKLTR…KIVINVDAVD (71 aa)) is the KH type-2 domain.

Belongs to the universal ribosomal protein uS3 family. As to quaternary structure, part of the 30S ribosomal subunit. Forms a tight complex with proteins S10 and S14.

In terms of biological role, binds the lower part of the 30S subunit head. Binds mRNA in the 70S ribosome, positioning it for translation. In Mesomycoplasma hyopneumoniae (strain 232) (Mycoplasma hyopneumoniae), this protein is Small ribosomal subunit protein uS3.